A 1709-amino-acid polypeptide reads, in one-letter code: Acrosomal protein KIAA1210 (1709 aa).

Disordered stretches follow at residues Pro207–Ala226, Pro239–Pro275, Pro451–Thr663, Pro763–Glu973, Leu1211–Ala1382, Thr1408–His1516, Ala1539–Tyr1571, and Phe1589–Gly1653. Positions Pro257–Ser272 are enriched in basic residues. Residues Glu473 to Gly490 are compositionally biased toward basic and acidic residues. 2 stretches are compositionally biased toward polar residues: residues Ala494–Thr505 and Asp514–Tyr527. Residues Glu595 to Gln608 are compositionally biased toward low complexity. A compositionally biased stretch (basic and acidic residues) spans Pro651–Thr663. Residues Glu777–Glu794 are compositionally biased toward acidic residues. 5 stretches are compositionally biased toward polar residues: residues Lys886–Ser941, Phe1288–Gln1299, His1332–Gly1350, Pro1366–His1376, and Asp1457–Gln1469. Positions Ser1502–Gly1513 are enriched in low complexity. The span at Gln1542–Ala1552 shows a compositional bias: basic and acidic residues.

Interacts with TOP2B.

Its subcellular location is the cytoplasmic vesicle. The protein localises to the secretory vesicle. It is found in the acrosome. This chain is Acrosomal protein KIAA1210, found in Homo sapiens (Human).